The primary structure comprises 989 residues: Bifunctional glutamine synthetase adenylyltransferase/adenylyl-removing enzyme (989 aa).

Residues 1 to 474 (MNSSAIDADI…HYGKLFEGDP (474 aa)) form an adenylyl removase region. The adenylyl transferase stretch occupies residues 480-989 (LPIDYAGGPD…FNRLIGGDSA (510 aa)).

Belongs to the GlnE family. Mg(2+) serves as cofactor.

It catalyses the reaction [glutamine synthetase]-O(4)-(5'-adenylyl)-L-tyrosine + phosphate = [glutamine synthetase]-L-tyrosine + ADP. The catalysed reaction is [glutamine synthetase]-L-tyrosine + ATP = [glutamine synthetase]-O(4)-(5'-adenylyl)-L-tyrosine + diphosphate. Functionally, involved in the regulation of glutamine synthetase GlnA, a key enzyme in the process to assimilate ammonia. When cellular nitrogen levels are high, the C-terminal adenylyl transferase (AT) inactivates GlnA by covalent transfer of an adenylyl group from ATP to specific tyrosine residue of GlnA, thus reducing its activity. Conversely, when nitrogen levels are low, the N-terminal adenylyl removase (AR) activates GlnA by removing the adenylyl group by phosphorolysis, increasing its activity. The regulatory region of GlnE binds the signal transduction protein PII (GlnB) which indicates the nitrogen status of the cell. The protein is Bifunctional glutamine synthetase adenylyltransferase/adenylyl-removing enzyme of Rhodopseudomonas palustris (strain BisB5).